We begin with the raw amino-acid sequence, 527 residues long: Inositolphosphotransferase 1 (527 aa).

Topologically, residues 1–24 are cytoplasmic; the sequence is MNVIFSLASFVKNMYNASLNQRNL. A helical transmembrane segment spans residues 25–45; sequence ISLPFNFMLNFAPVFIWLSIF. Over 46 to 99 the chain is Lumenal; the sequence is KRAGLIPIRLRPDIHSKFAFFADQFLFGDYWHELTVQLPDNTSKLFFWSFISSS. The helical transmembrane segment at 100–120 threads the bilayer; it reads AFLLVFLICIPFAIWYYIYYI. Residues 121–152 are Cytoplasmic-facing; sequence KHVNYNLLEWFANIFHYPCKRKQRPIQKRFRT. Residues 153–173 traverse the membrane as a helical segment; it reads IFIPFALPLFTFVILNIDHFF. Residues 174-190 lie on the Lumenal side of the membrane; that stretch reads AYQSDANFTKTKDLLAW. Residues 191 to 211 form a helical membrane-spanning segment; it reads FSYVILHLTAPILTAVYLYVF. Over 212–219 the chain is Cytoplasmic; the sequence is QPPGTLKC. Residues 220–240 traverse the membrane as a helical segment; it reads FSFALGLQNIAGVLTHLLVPM. The Lumenal segment spans residues 241 to 288; the sequence is ASPWFTHLYGIDDTEHVNYTQEGFAAGLIRVDSHLGTHLNTKGFHMSP. Residues 289 to 309 form a helical membrane-spanning segment; sequence IVFGAVPSLHSAIAFQCFLFL. The Cytoplasmic segment spans residues 310 to 435; sequence VSRSTSLKHR…KWIFKIVNDG (126 aa). The disordered stretch occupies residues 331 to 404; that stretch reads NDSSTFKLSE…GGGDGSIINS (74 aa). Over residues 376–389 the composition is skewed to low complexity; that stretch reads ERSSSPSSSFTVSS. Residues 436–456 traverse the membrane as a helical segment; sequence FIPKFWAILYIILQWWATMYL. Topologically, residues 457–461 are lumenal; the sequence is DHHYR. Residues 462–482 traverse the membrane as a helical segment; that stretch reads FDLFVGVLYAMTSFIIINWFV. The Cytoplasmic portion of the chain corresponds to 483-527; it reads LQPKVLKKWIHIRLGDKVDTRNEARTFGMRVFCGTKMEWFFDPLA.

The protein localises to the golgi apparatus membrane. It carries out the reaction an alpha-D-mannosyl-(1&lt;-&gt;6)-1D-myo-inositol-1-phospho-N-[(R)-2-hydroxy-very-long-chain fatty acyl]-(R)-4-hydroxysphingoid base + a 1,2-diacyl-sn-glycero-3-phospho-(1D-myo-inositol) = an alpha-D-mannosyl-6-(1D-myo-inositol phospho)-(1&lt;-&gt;6)-1D-myo-inositol-1-phospho-N-[(R)-2-hydroxy-very-long-chain fatty acyl]-(R)-4-hydroxysphingoid base + a 1,2-diacyl-sn-glycerol. The catalysed reaction is a mannosylinositol-1-phospho-N-acyl-sphingoid base + a 1,2-diacyl-sn-glycero-3-phospho-(1D-myo-inositol) = an inositol phosphomannosylnositol-1-phospho-N-acylsphingoid base + a 1,2-diacyl-sn-glycerol. The enzyme catalyses a mannosylinositol-1-phospho-N-(2-hydroxyacyl)-4R-hydroxysphingoid base + a 1,2-diacyl-sn-glycero-3-phospho-(1D-myo-inositol) = an inositol phosphomannosylnositol-1-phospho-N-(2-hydroxyacyl)-4R-hydroxysphingoid base + a 1,2-diacyl-sn-glycerol. Its function is as follows. Catalyzes the addition of a phosphorylinositol group onto mannosyl phosphorylinositol ceramide (MIPC) to form mannosyl diphosphorylinositol ceramide (M(IP)2C), the major sphingolipid in membranes of S.cerevisiae. In Saccharomyces cerevisiae (strain ATCC 204508 / S288c) (Baker's yeast), this protein is Inositolphosphotransferase 1.